We begin with the raw amino-acid sequence, 92 residues long: YcgL domain-containing protein Shewana3_2381 (92 aa).

The YcgL domain occupies 1–85 (MLCAVYKSSR…PQVNLLAEHR (85 aa)).

This is YcgL domain-containing protein Shewana3_2381 from Shewanella sp. (strain ANA-3).